Consider the following 335-residue polypeptide: RNA 3'-terminal phosphate cyclase (335 aa).

Residues glutamine 101 and 282–285 (HMGD) each bind ATP. The active-site Tele-AMP-histidine intermediate is the histidine 306.

Belongs to the RNA 3'-terminal cyclase family. Type 1 subfamily.

The protein resides in the cytoplasm. The catalysed reaction is a 3'-end 3'-phospho-ribonucleotide-RNA + ATP = a 3'-end 2',3'-cyclophospho-ribonucleotide-RNA + AMP + diphosphate. Catalyzes the conversion of 3'-phosphate to a 2',3'-cyclic phosphodiester at the end of RNA. The mechanism of action of the enzyme occurs in 3 steps: (A) adenylation of the enzyme by ATP; (B) transfer of adenylate to an RNA-N3'P to produce RNA-N3'PP5'A; (C) and attack of the adjacent 2'-hydroxyl on the 3'-phosphorus in the diester linkage to produce the cyclic end product. The biological role of this enzyme is unknown but it is likely to function in some aspects of cellular RNA processing. The protein is RNA 3'-terminal phosphate cyclase of Sulfolobus acidocaldarius (strain ATCC 33909 / DSM 639 / JCM 8929 / NBRC 15157 / NCIMB 11770).